The following is a 330-amino-acid chain: DNA-directed RNA polymerase subunit alpha (330 aa).

Residues 1-237 form an alpha N-terminal domain (alpha-NTD) region; that stretch reads MYTEINEMLT…RQLHAFVDMK (237 aa). The alpha C-terminal domain (alpha-CTD) stretch occupies residues 251–330; it reads FDPVLLRSVD…ENWPPASLGE (80 aa).

The protein belongs to the RNA polymerase alpha chain family. Homodimer. The RNAP catalytic core consists of 2 alpha, 1 beta, 1 beta' and 1 omega subunit. When a sigma factor is associated with the core the holoenzyme is formed, which can initiate transcription.

The enzyme catalyses RNA(n) + a ribonucleoside 5'-triphosphate = RNA(n+1) + diphosphate. DNA-dependent RNA polymerase catalyzes the transcription of DNA into RNA using the four ribonucleoside triphosphates as substrates. This is DNA-directed RNA polymerase subunit alpha from Legionella pneumophila (strain Corby).